A 132-amino-acid polypeptide reads, in one-letter code: ATP synthase epsilon chain, chloroplastic (132 aa).

The protein belongs to the ATPase epsilon chain family. As to quaternary structure, F-type ATPases have 2 components, CF(1) - the catalytic core - and CF(0) - the membrane proton channel. CF(1) has five subunits: alpha(3), beta(3), gamma(1), delta(1), epsilon(1). CF(0) has three main subunits: a, b and c.

Its subcellular location is the plastid. The protein resides in the chloroplast thylakoid membrane. Functionally, produces ATP from ADP in the presence of a proton gradient across the membrane. This Adiantum capillus-veneris (Maidenhair fern) protein is ATP synthase epsilon chain, chloroplastic.